The primary structure comprises 502 residues: Cytochrome P450 81D1 (502 aa).

The chain crosses the membrane as a helical span at residues 6–26; it reads IRVVLYSIFSLIFLIISFKFL. Cysteine 440 lines the heme pocket.

Belongs to the cytochrome P450 family. The cofactor is heme.

It localises to the membrane. The sequence is that of Cytochrome P450 81D1 (CYP81D1) from Arabidopsis thaliana (Mouse-ear cress).